The primary structure comprises 399 residues: Oligoribonuclease NrnB (399 aa).

The cofactor is Mn(2+). Co(2+) is required as a cofactor. Mg(2+) serves as cofactor.

It is found in the cytoplasm. Its function is as follows. Degrades RNA oligonucleotides with a length of 5 nucleotides in a 3'- to 5'-direction. Less active on shorter RNA oligonucleotides and on those with a length of 24 nucleotides. Prefers RNA oligonucleotides containing adenines rather than cytosines. This Bacillus subtilis (strain 168) protein is Oligoribonuclease NrnB (nrnB).